A 71-amino-acid chain; its full sequence is Brevinin-1HN1 (71 aa).

The first 22 residues, 1-22 (MFTSKKPLLLLFFLGTINLSLC), serve as a signal peptide directing secretion. A propeptide spanning residues 23-45 (EQERDADEEERRDDPDERDVEVE) is cleaved from the precursor. Cysteines 65 and 71 form a disulfide.

In terms of tissue distribution, expressed by the skin glands.

The protein localises to the secreted. Functionally, has antimicrobial activity against Gram-positive bacteria and fungi but has weak or no activity against a range of Gram-negative bacteria except P.faecalis. Active against the Gram-positive bacteria E.faecium 091299 (MIC=19 uM), E.faecalis 981 (MIC=19 uM), S.aureus ATCC 25923 (MIC=1.2 uM), S.carnosus KHS (MIC=4.8 uM), B.licheniformis X39 (MIC=2.4 uM) and R.rhodochrous X15 (MIC=1.2 uM). Active against the Gram-negative bacterium P.faecalis X29 (MIC=4.8 uM), is virtually inactive against E.coli ATCC 25922 (MIC=150 uM) and inactive against P.aeruginosa and S.typhi. Has antifungal activity against C.albicans ATCC 2002 (MIC=2.4 uM) and is also active against the slime mold 090223 (MIC=1.2 uM). Has low hemolytic activity against human erythrocytes (LC(50)=75 uM). The protein is Brevinin-1HN1 of Odorrana hainanensis (Odor frog).